We begin with the raw amino-acid sequence, 251 residues long: uncharacterized protein (251 aa).

This sequence belongs to the FAM243 family.

This is an uncharacterized protein from Homo sapiens (Human).